A 295-amino-acid chain; its full sequence is Ribosomal RNA small subunit methyltransferase A (295 aa).

S-adenosyl-L-methionine-binding residues include asparagine 40, valine 42, glycine 67, glutamate 88, aspartate 118, and asparagine 135.

This sequence belongs to the class I-like SAM-binding methyltransferase superfamily. rRNA adenine N(6)-methyltransferase family. RsmA subfamily.

It is found in the cytoplasm. It carries out the reaction adenosine(1518)/adenosine(1519) in 16S rRNA + 4 S-adenosyl-L-methionine = N(6)-dimethyladenosine(1518)/N(6)-dimethyladenosine(1519) in 16S rRNA + 4 S-adenosyl-L-homocysteine + 4 H(+). Functionally, specifically dimethylates two adjacent adenosines (A1518 and A1519) in the loop of a conserved hairpin near the 3'-end of 16S rRNA in the 30S particle. May play a critical role in biogenesis of 30S subunits. This Arthrobacter sp. (strain FB24) protein is Ribosomal RNA small subunit methyltransferase A.